The sequence spans 87 residues: UPF0248 protein TSIB_1445 (87 aa).

It belongs to the UPF0248 family.

This is UPF0248 protein TSIB_1445 from Thermococcus sibiricus (strain DSM 12597 / MM 739).